The following is a 1286-amino-acid chain: DNA-directed RNA polymerase subunit beta' (1286 aa).

Zn(2+) contacts are provided by cysteine 58, cysteine 60, cysteine 73, and cysteine 76. Mg(2+) is bound by residues aspartate 533, aspartate 535, and aspartate 537. Zn(2+)-binding residues include cysteine 867, cysteine 944, cysteine 951, and cysteine 954.

It belongs to the RNA polymerase beta' chain family. The RNAP catalytic core consists of 2 alpha, 1 beta, 1 beta' and 1 omega subunit. When a sigma factor is associated with the core the holoenzyme is formed, which can initiate transcription. Requires Mg(2+) as cofactor. The cofactor is Zn(2+).

The enzyme catalyses RNA(n) + a ribonucleoside 5'-triphosphate = RNA(n+1) + diphosphate. In terms of biological role, DNA-dependent RNA polymerase catalyzes the transcription of DNA into RNA using the four ribonucleoside triphosphates as substrates. This is DNA-directed RNA polymerase subunit beta' from Tropheryma whipplei (strain TW08/27) (Whipple's bacillus).